We begin with the raw amino-acid sequence, 309 residues long: Histidine protein methyltransferase 1 homolog (309 aa).

2 disordered regions span residues 1–37 and 79–111; these read MSFK…FDSS and KPFK…NNKD. Basic and acidic residues predominate over residues 25–37; that stretch reads EESKLDISEFDSS. Residues 84 to 109 show a composition bias toward low complexity; the sequence is NQDNNNDNNVNSNDKNDNNNNNNNNN. Residues 132–136, glycine 159, 179–181, 209–211, and serine 229 contribute to the S-adenosyl-L-methionine site; these read LWECS, QDY, and GDW.

Belongs to the methyltransferase superfamily. METTL18 family.

It is found in the cytoplasm. The protein resides in the cytosol. It localises to the nucleus. Its subcellular location is the nucleolus. It carries out the reaction L-histidyl-[protein] + S-adenosyl-L-methionine = N(tele)-methyl-L-histidyl-[protein] + S-adenosyl-L-homocysteine + H(+). In terms of biological role, protein-L-histidine N-tele-methyltransferase that probably monomethylates RPL3. Through the methylation of RPL3 may regulate the dynamics of pre-rRNA processing, ribosome biogenesis, and translation. This Dictyostelium discoideum (Social amoeba) protein is Histidine protein methyltransferase 1 homolog.